Consider the following 463-residue polypeptide: Ribosomal protein uS12 methylthiotransferase RimO (463 aa).

One can recognise an MTTase N-terminal domain in the interval Pro15 to Pro130. Cys24, Cys60, Cys89, Cys161, Cys165, and Cys168 together coordinate [4Fe-4S] cluster. The Radical SAM core domain maps to Leu147–Ala392. The region spanning Glu395–Val463 is the TRAM domain.

This sequence belongs to the methylthiotransferase family. RimO subfamily. Requires [4Fe-4S] cluster as cofactor.

The protein localises to the cytoplasm. The catalysed reaction is L-aspartate(89)-[ribosomal protein uS12]-hydrogen + (sulfur carrier)-SH + AH2 + 2 S-adenosyl-L-methionine = 3-methylsulfanyl-L-aspartate(89)-[ribosomal protein uS12]-hydrogen + (sulfur carrier)-H + 5'-deoxyadenosine + L-methionine + A + S-adenosyl-L-homocysteine + 2 H(+). Its function is as follows. Catalyzes the methylthiolation of an aspartic acid residue of ribosomal protein uS12. The chain is Ribosomal protein uS12 methylthiotransferase RimO from Burkholderia thailandensis (strain ATCC 700388 / DSM 13276 / CCUG 48851 / CIP 106301 / E264).